The following is a 295-amino-acid chain: Pantothenate synthetase (295 aa).

Residue 30–37 (MGNLHDGH) participates in ATP binding. The active-site Proton donor is the histidine 37. Glutamine 61 provides a ligand contact to (R)-pantoate. Residue glutamine 61 coordinates beta-alanine. 149–152 (GEKD) contacts ATP. Glutamine 155 contributes to the (R)-pantoate binding site. ATP-binding positions include valine 178 and 186–189 (MSSR).

This sequence belongs to the pantothenate synthetase family. As to quaternary structure, homodimer.

It localises to the cytoplasm. It catalyses the reaction (R)-pantoate + beta-alanine + ATP = (R)-pantothenate + AMP + diphosphate + H(+). The protein operates within cofactor biosynthesis; (R)-pantothenate biosynthesis; (R)-pantothenate from (R)-pantoate and beta-alanine: step 1/1. In terms of biological role, catalyzes the condensation of pantoate with beta-alanine in an ATP-dependent reaction via a pantoyl-adenylate intermediate. In Photobacterium profundum (strain SS9), this protein is Pantothenate synthetase.